A 309-amino-acid polypeptide reads, in one-letter code: MIYLAGGCFWGVEEYFSQVDGVLDAVSGYANGRGDTTNYQLIHQTGHAETVEVAYDANRISLKELLLHFFRIIDPTSLNKQGNDRGSQYRTGIYYTDKADLAIIDEVFKEKAKDYKKKIVVEKAPLKHFIKAEDYHQDYLKKNPNGYCHIDINQATYPVIDESKYPKPSATEIKEKLSADEYRVTQKNETEKAFSNRYWDSFDAGIYVDVVTGEPLFSSKDKFESGCGWPSFSRPISPDVVRYKEDKSFNMTRTEVRSRSGNSHLGHVFTDGPKDQGGLRYCINSLSITFIPKADMEAKGYGYLLSSVE.

The peptide methionine sulfoxide reductase A stretch occupies residues 1-153 (MIYLAGGCFW…PNGYCHIDIN (153 aa)). Residue Cys-8 is part of the active site. The 124-residue stretch at 170–293 (ATEIKEKLSA…NSLSITFIPK (124 aa)) folds into the MsrB domain. The active-site Nucleophile is Cys-282.

This sequence in the N-terminal section; belongs to the MsrA Met sulfoxide reductase family. In the C-terminal section; belongs to the MsrB Met sulfoxide reductase family.

The enzyme catalyses L-methionyl-[protein] + [thioredoxin]-disulfide + H2O = L-methionyl-(S)-S-oxide-[protein] + [thioredoxin]-dithiol. It catalyses the reaction [thioredoxin]-disulfide + L-methionine + H2O = L-methionine (S)-S-oxide + [thioredoxin]-dithiol. The catalysed reaction is L-methionyl-[protein] + [thioredoxin]-disulfide + H2O = L-methionyl-(R)-S-oxide-[protein] + [thioredoxin]-dithiol. Functionally, has an important function as a repair enzyme for proteins that have been inactivated by oxidation. Catalyzes the reversible oxidation-reduction of methionine sulfoxide in proteins to methionine. The chain is Peptide methionine sulfoxide reductase MsrA/MsrB (msrAB) from Streptococcus pyogenes serotype M1.